A 446-amino-acid chain; its full sequence is CBL-interacting protein kinase 8 (446 aa).

Residues 13-266 (YEVGRTIGEG…IEEIRNDEWF (254 aa)) enclose the Protein kinase domain. Residues 19-27 (IGEGTFAKV) and Lys42 contribute to the ATP site. The active-site Proton acceptor is Asp136. An activation loop region spans residues 154-181 (DFGLSAWPAQGGALLRTTCGTPNYVAPE). In terms of domain architecture, NAF spans 301-329 (LDDEAGPLTLNAFDLIILSQGLNLAALFD). Residues 336-365 (KLQNRFLSRKPAKVIMSSMEVVAQSMGYKT) are PPI.

Belongs to the protein kinase superfamily. CAMK Ser/Thr protein kinase family. SNF1 subfamily. Mn(2+) is required as a cofactor.

It catalyses the reaction L-seryl-[protein] + ATP = O-phospho-L-seryl-[protein] + ADP + H(+). The enzyme catalyses L-threonyl-[protein] + ATP = O-phospho-L-threonyl-[protein] + ADP + H(+). In terms of biological role, CIPK serine-threonine protein kinases interact with CBL proteins. Binding of a CBL protein to the regulatory NAF domain of CIPK protein lead to the activation of the kinase in a calcium-dependent manner. The chain is CBL-interacting protein kinase 8 (CIPK8) from Oryza sativa subsp. japonica (Rice).